A 245-amino-acid chain; its full sequence is Methyltransferase-like protein 27 (245 aa).

The protein is Methyltransferase-like protein 27 of Homo sapiens (Human).